A 251-amino-acid chain; its full sequence is 5-oxoprolinase subunit A (251 aa).

Belongs to the LamB/PxpA family. As to quaternary structure, forms a complex composed of PxpA, PxpB and PxpC.

The catalysed reaction is 5-oxo-L-proline + ATP + 2 H2O = L-glutamate + ADP + phosphate + H(+). Catalyzes the cleavage of 5-oxoproline to form L-glutamate coupled to the hydrolysis of ATP to ADP and inorganic phosphate. This is 5-oxoprolinase subunit A from Vibrio parahaemolyticus serotype O3:K6 (strain RIMD 2210633).